The primary structure comprises 244 residues: Phosphoribosyl isomerase A (244 aa).

The Proton acceptor role is filled by D10. Catalysis depends on D129, which acts as the Proton donor.

The protein belongs to the HisA/HisF family.

Its subcellular location is the cytoplasm. The enzyme catalyses 1-(5-phospho-beta-D-ribosyl)-5-[(5-phospho-beta-D-ribosylamino)methylideneamino]imidazole-4-carboxamide = 5-[(5-phospho-1-deoxy-D-ribulos-1-ylimino)methylamino]-1-(5-phospho-beta-D-ribosyl)imidazole-4-carboxamide. It catalyses the reaction N-(5-phospho-beta-D-ribosyl)anthranilate = 1-(2-carboxyphenylamino)-1-deoxy-D-ribulose 5-phosphate. It participates in amino-acid biosynthesis; L-histidine biosynthesis; L-histidine from 5-phospho-alpha-D-ribose 1-diphosphate: step 4/9. The protein operates within amino-acid biosynthesis; L-tryptophan biosynthesis; L-tryptophan from chorismate: step 3/5. Its function is as follows. Involved in both the histidine and tryptophan biosynthetic pathways. This is Phosphoribosyl isomerase A (priA) from Mycobacterium tuberculosis (strain CDC 1551 / Oshkosh).